A 491-amino-acid chain; its full sequence is Probable V-type proton ATPase subunit B 1 (491 aa).

Residue Arg-380 coordinates ATP.

This sequence belongs to the ATPase alpha/beta chains family. In terms of assembly, V-ATPase is a heteromultimeric enzyme made up of two complexes: the ATP-hydrolytic V1 complex and the proton translocation V0 complex. The V1 complex consists of three catalytic AB heterodimers that form a heterohexamer, three peripheral stalks each consisting of EG heterodimers, one central rotor including subunits D and F, and the regulatory subunits C and H. The proton translocation complex V0 consists of the proton transport subunit a, a ring of proteolipid subunits c9c'', rotary subunit d, subunits e and f, and the accessory subunits vah-19/Ac45 and vah-20/PRR.

In terms of biological role, non-catalytic subunit of the V1 complex of vacuolar(H+)-ATPase (V-ATPase), a multisubunit enzyme composed of a peripheral complex (V1) that hydrolyzes ATP and a membrane integral complex (V0) that translocates protons. V-ATPase is responsible for acidifying and maintaining the pH of intracellular compartments and in some cell types, is targeted to the plasma membrane, where it is responsible for acidifying the extracellular environment. Essential for the proper assembly and activity of V-ATPase. Required maternally for early embryogenesis and zygotically during morphogenesis. Specifically, involved in the clearance of apoptotic cell corpses in embryos. Also, during embryonic development, the V-ATPase is required to repress fusion of epidermal cells probably by negatively regulating eff-1-mediated cell fusion. In neurons, required for necrotic cell death by promoting intracellular acidification. Required for cell death induced by hypoxia. Required for acidification of synaptic vesicles and the release of neurotransmitters from adult neurons. The sequence is that of Probable V-type proton ATPase subunit B 1 from Caenorhabditis briggsae.